The primary structure comprises 410 residues: Eukaryotic initiation factor 4A (410 aa).

Positions 37 to 65 match the Q motif motif; that stretch reads ESFDSMGLQENLLRGIYAYGFEKPSAIQQ. One can recognise a Helicase ATP-binding domain in the interval 68–238; that stretch reads IVPFCKGLDV…RKFMNKPVRI (171 aa). 81–88 is an ATP binding site; it reads AQSGTGKT. The short motif at 186 to 189 is the DEAD box element; it reads DEAD. The Helicase C-terminal domain occupies 249 to 410; it reads GIKQFYVNID…ELPANVADLL (162 aa).

Belongs to the DEAD box helicase family. eIF4A subfamily. EIF4F is a multi-subunit complex, the composition of which varies with external and internal environmental conditions. It is composed of at least EIF4A, EIF4E and EIF4G.

The catalysed reaction is ATP + H2O = ADP + phosphate + H(+). Functionally, ATP-dependent RNA helicase which is a subunit of the eIF4F complex involved in cap recognition and is required for mRNA binding to ribosome. In the current model of translation initiation, eIF4A unwinds RNA secondary structures in the 5'-UTR of mRNAs which is necessary to allow efficient binding of the small ribosomal subunit, and subsequent scanning for the initiator codon. This chain is Eukaryotic initiation factor 4A, found in Zea mays (Maize).